Consider the following 524-residue polypeptide: Apoptosis inhibitor 5-A (524 aa).

Positions 1 to 360 are ARM-like and Heat-like helical repeats; it reads MATVEELYRS…HQLGRKLPDF (360 aa). A disordered region spans residues 440–524; that stretch reads TLSWKPVQRT…RGNRSRGRIY (85 aa). The Nuclear localization signal signature appears at 455 to 476; the sequence is KRTSDETSSTSPPKKPIVGPKR. Residues 503–516 are compositionally biased toward gly residues; it reads GFQGGRGRGWGGRG.

Belongs to the API5 family. Monomer.

The protein localises to the nucleus. May be an antiapoptotic factor. This chain is Apoptosis inhibitor 5-A (api5-a), found in Xenopus laevis (African clawed frog).